Here is a 299-residue protein sequence, read N- to C-terminus: Protoheme IX farnesyltransferase (299 aa).

8 helical membrane passes run 25–45, 51–71, 97–117, 119–139, 147–167, 173–193, 225–245, and 275–295; these read IVSL…PDLA, LFGT…NHLI, ALAF…FLVN, LTAW…TAFL, IVLG…AVTG, AFLL…ALAL, FLLF…LLYL, and FGYS…DHYL.

This sequence belongs to the UbiA prenyltransferase family. Protoheme IX farnesyltransferase subfamily.

It is found in the cell inner membrane. It carries out the reaction heme b + (2E,6E)-farnesyl diphosphate + H2O = Fe(II)-heme o + diphosphate. Its pathway is porphyrin-containing compound metabolism; heme O biosynthesis; heme O from protoheme: step 1/1. Functionally, converts heme B (protoheme IX) to heme O by substitution of the vinyl group on carbon 2 of heme B porphyrin ring with a hydroxyethyl farnesyl side group. The polypeptide is Protoheme IX farnesyltransferase (Nitrosococcus oceani (strain ATCC 19707 / BCRC 17464 / JCM 30415 / NCIMB 11848 / C-107)).